The sequence spans 427 residues: Transcriptional enhancer factor TEF-3 (427 aa).

A disordered region spans residues 1–32; the sequence is MTSNEWSSPDSPEGSSISGGSQALDKPIDNDA. Positions 7-21 are enriched in low complexity; it reads SSPDSPEGSSISGGS. Positions 29–105 form a DNA-binding region, TEA; sequence DNDAEGVWSP…QVLARRKARE (77 aa). Positions 78 to 94 match the Nuclear localization signal motif; the sequence is IKLRTGKTRTRKQVSSH. A disordered region spans residues 163-206; the sequence is QPGTSHDVKPFSQNTYPVQPPLPLPGFESPAGPTPSPSAPLAPP. Pro residues predominate over residues 194-205; the sequence is GPTPSPSAPLAP.

As to quaternary structure, interacts with WWTR1/TAZ. Interacts with YAP1. Preferentially expressed in lung and in skeletal muscle.

The protein localises to the nucleus. Its function is as follows. Transcription factor which plays a key role in the Hippo signaling pathway, a pathway involved in organ size control and tumor suppression by restricting proliferation and promoting apoptosis. The core of this pathway is composed of a kinase cascade wherein MST1/MST2, in complex with its regulatory protein SAV1, phosphorylates and activates LATS1/2 in complex with its regulatory protein MOB1, which in turn phosphorylates and inactivates YAP1 oncoprotein and WWTR1/TAZ. Acts by mediating gene expression of YAP1 and WWTR1/TAZ, thereby regulating cell proliferation, migration and epithelial mesenchymal transition (EMT) induction. Binds specifically and non-cooperatively to the Sph and GT-IIC 'enhansons' (5'-GTGGAATGT-3') and activates transcription. Binds to the M-CAT motif. Might play a role in the embryonic development of skeletal muscle. The polypeptide is Transcriptional enhancer factor TEF-3 (Tead4) (Mus musculus (Mouse)).